The following is a 493-amino-acid chain: 3-octaprenyl-4-hydroxybenzoate carboxy-lyase (493 aa).

A Mn(2+)-binding site is contributed by asparagine 172. Prenylated FMN-binding positions include 175-177 (IYR), 189-191 (RWL), and 194-195 (RG). Residue glutamate 238 coordinates Mn(2+). Aspartate 287 (proton donor) is an active-site residue.

This sequence belongs to the UbiD family. Homohexamer. Prenylated FMN serves as cofactor. Requires Mn(2+) as cofactor.

It localises to the cell membrane. The catalysed reaction is a 4-hydroxy-3-(all-trans-polyprenyl)benzoate + H(+) = a 2-(all-trans-polyprenyl)phenol + CO2. It functions in the pathway cofactor biosynthesis; ubiquinone biosynthesis. Its function is as follows. Catalyzes the decarboxylation of 3-octaprenyl-4-hydroxy benzoate to 2-octaprenylphenol, an intermediate step in ubiquinone biosynthesis. This is 3-octaprenyl-4-hydroxybenzoate carboxy-lyase from Shewanella pealeana (strain ATCC 700345 / ANG-SQ1).